Reading from the N-terminus, the 398-residue chain is tRNA-specific 2-thiouridylase MnmA (398 aa).

Residues 20–27 (AMSGGVDS) and leucine 46 contribute to the ATP site. Cysteine 114 (nucleophile) is an active-site residue. Residues cysteine 114 and cysteine 210 are joined by a disulfide bond. Glycine 138 is an ATP binding site. The segment at 160-162 (RDQ) is interaction with tRNA. Cysteine 210 acts as the Cysteine persulfide intermediate in catalysis.

The protein belongs to the MnmA/TRMU family.

Its subcellular location is the cytoplasm. It catalyses the reaction S-sulfanyl-L-cysteinyl-[protein] + uridine(34) in tRNA + AH2 + ATP = 2-thiouridine(34) in tRNA + L-cysteinyl-[protein] + A + AMP + diphosphate + H(+). Catalyzes the 2-thiolation of uridine at the wobble position (U34) of tRNA, leading to the formation of s(2)U34. This is tRNA-specific 2-thiouridylase MnmA from Brucella canis (strain ATCC 23365 / NCTC 10854 / RM-666).